The primary structure comprises 197 residues: ADP-ribosylation factor-like protein 16 (197 aa).

Residues 30–37, 82–86, and 139–142 contribute to the GTP site; these read GATGVGKT, ELGGC, and NKID.

This sequence belongs to the small GTPase superfamily. Arf family. As to quaternary structure, interacts with RIGI; this interaction is GTP-dependent and induced upon viral infection; this interaction suppresses the RNA sensing activity of RIGI.

The protein localises to the cytoplasm. May suppress the RNA sensing activity of RIGI in a GTP-dependent. The protein is ADP-ribosylation factor-like protein 16 of Homo sapiens (Human).